A 1478-amino-acid chain; its full sequence is MVKLDIHTLAHHLKQERLYVNSEKQLIQRLNADVLKTAEKLYRTAWIAKQQRINLDRLIITSAEASPAECCQHAKILEDTQFVDGYKQLGFQETAYGEFLSRLRENPRLIASSLVAGEKLNQENTQSVIYTVFTSLYGNCIMQEDESYLLQVLRYLIEFELKESDNPRRLLRRGTCAFSILFKLFSEGLFSAKLFLTATLHEPIMQLLVEDEDHLETDPNKLIERFSPSQQEKLFGEKGSDRFRQKVQEMVESNEAKLVALVNKFIGYLKQNTYCFPHSLRWIVSQMYKTLSCVDRLEVGEVRAMCTDLLLACFICPAVVNPEQYGIISDAPINEVARFNLMQVGRLLQQLAMTGSEEGDPRTKSSLGKFDKSCVAAFLDVVIGGRAVETPPLSSVNLLEGLSRTVVYITYSQLITLVNFMKSVMSGDQLREDRMALDNLLANLPPAKPGKSSSLEMTPYNTPQLSPATTPANKKNRLPIATRSRSRTNMLMDLHMDHEGSSQETIQEVQPEEVLVISLGTGPQLTPGMMSENEVLNMQLSDGGQGDVPVDENKLHGKPDKTLRFSLCSDNLEGISEGPSNRSNSVSSLDLEGESVSELGAGPSGSNGVEALQLLEHEQATTQDNLDDKLRKFEIRDMMGLTDDRDISETVSETWSTDVLGSDFDPNIDEDRLQEIAGAAAENMLGSLLCLPGSGSVLLDPCTGSTISETTSEAWSVEVLPSDSEAPDLKQEERLQELESCSGLGSTSDDTDVREVSSRPSTPGLSVVSGISATSEDIPNKIEDLRSECSSDFGGKDSVTSPDMDEITHGAHQLTSPPSQSESLLAMFDPLSSHEGASAVVRPKVHYARPSHPPPDPPILEGAVGGNEARLPNFGSHVLTPAEMEAFKQRHSYPERLVRSRSSDIVSSVRRPMSDPSWNRRPGNEERELPPAAAIGATSLVAAPHSSSSSPSKDSSRGETEERKDSDDEKSDRNRPWWRKRFVSAMPKAPIPFRKKEKQEKDKDDLGPDRFSTLTDDPSPRLSAQAQVAEDILDKYRNAIKRTSPSDGAMANYESTGDNHDRDLSSKLLYHSDKEVMGDGESAHDSPRDEALQNISADDLPDSASQAAHPQDSAFSYRDAKKKLRLALCSADSVAFPVLTHSTRNGLPDHTDPEDNEIVCFLKVQIAEAINLQDKNLMAQLQETMRCVCRFDNRTCRKLLASIAEDYRKRAPYIAYLTRCRQGLQTTQAHLERLLQRVLRDKEVANRYFTTVCVRLLLESKEKKIREFIQDFQKLTAADDKTAQVEDFLQFLYGAMAQDVIWQNASEEQLQDAQLAIERSVMNRIFKLAFYPNQDGDILRDQVLHEHIQRLSKVVTANHRALQIPEVYLREAPWPSAQSEIRTISAYKTPRDKVQCILRMCSTIMNLLSLANEDSVPGADDFVPVLVFVLIKANPPCLLSTVQYISSFYASCLSGEESYWWMQFTAAVEFIKTIDDRK.

Residues 147–385 (SYLLQVLRYL…AAFLDVVIGG (239 aa)) form the Ras-GAP domain. Phosphoserine is present on S227. Phosphothreonine occurs at positions 390 and 458. Y460 carries the phosphotyrosine modification. S466 carries the post-translational modification Phosphoserine. T470 bears the Phosphothreonine mark. 2 positions are modified to phosphoserine: S566 and S569. Disordered stretches follow at residues 574 to 608 (GISEGPSNRSNSVSSLDLEGESVSELGAGPSGSNG), 739 to 820 (ESCS…PPSQ), and 846 to 874 (HYARPSHPPPDPPILEGAVGGNEARLPNF). Residues 578 to 588 (GPSNRSNSVSS) are compositionally biased toward polar residues. 3 positions are modified to phosphoserine: S742, S746, and S757. The segment covering 758–777 (SRPSTPGLSVVSGISATSED) has biased composition (polar residues). T762 is modified (phosphothreonine). S766 is modified (phosphoserine). Positions 778–789 (IPNKIEDLRSEC) are enriched in basic and acidic residues. Residues S876, S902, S903, S908, S914, and S966 each carry the phosphoserine modification. The span at 889–902 (QRHSYPERLVRSRS) shows a compositional bias: basic and acidic residues. 2 disordered regions span residues 889 to 1023 (QRHS…PRLS) and 1043 to 1064 (TSPSDGAMANYESTGDNHDRDL). Basic and acidic residues-rich tracts occupy residues 954–975 (DSSRGETEERKDSDDEKSDRNR) and 997–1008 (EKQEKDKDDLGP). The span at 1012–1023 (STLTDDPSPRLS) shows a compositional bias: polar residues. S1019, S1046, S1096, and S1103 each carry phosphoserine. A VPS9 domain is found at 1338 to 1478 (ILRDQVLHEH…EFIKTIDDRK (141 aa)).

Belongs to the GAPVD1 family. Interacts with TRIP10/CIP4. Interacts with RAB5A. As to quaternary structure, (Microbial infection) Interacts with P.falciparum (strain 3D7) CK1. Expressed in erythrocytes (at protein level).

It localises to the membrane. The protein resides in the endosome. Functionally, acts both as a GTPase-activating protein (GAP) and a guanine nucleotide exchange factor (GEF), and participates in various processes such as endocytosis, insulin receptor internalization or LC2A4/GLUT4 trafficking. Acts as a GEF for the Ras-related protein RAB31 by exchanging bound GDP for free GTP, leading to regulate LC2A4/GLUT4 trafficking. In the absence of insulin, it maintains RAB31 in an active state and promotes a futile cycle between LC2A4/GLUT4 storage vesicles and early endosomes, retaining LC2A4/GLUT4 inside the cells. Upon insulin stimulation, it is translocated to the plasma membrane, releasing LC2A4/GLUT4 from intracellular storage vesicles. Also involved in EGFR trafficking and degradation, possibly by promoting EGFR ubiquitination and subsequent degradation by the proteasome. Has GEF activity for Rab5 and GAP activity for Ras. This chain is GTPase-activating protein and VPS9 domain-containing protein 1 (GAPVD1), found in Homo sapiens (Human).